Reading from the N-terminus, the 390-residue chain is Cathepsin D (390 aa).

A propeptide spans 1-44 (VIRIPLHKFTSIRRTMSEAAGXVXXLIAKGPISKYATGEPAVRQ) (activation peptide). The region spanning 59-385 (YYGEIGIGTP…DRDQNRVGLA (327 aa)) is the Peptidase A1 domain. 2 disulfide bridges follow: C71-C140 and C90-C97. The active site involves D77. N-linked (GlcNAc...) asparagine glycans are attached at residues N114 and N241. The cysteines at positions 264 and 268 are disulfide-linked. D273 is an active-site residue. A disulfide bond links C307 and C344.

The protein belongs to the peptidase A1 family. As to quaternary structure, consists of a light chain and a heavy chain. Interacts with ADAM30; this leads to activation of CTSD. Interacts with GRN; stabilizes CTSD; increases its proteolytic activity. N- and O-glycosylated. Post-translationally, undergoes proteolytic cleavage and activation by ADAM30.

Its subcellular location is the lysosome. The protein resides in the melanosome. It is found in the secreted. It localises to the extracellular space. It catalyses the reaction Specificity similar to, but narrower than, that of pepsin A. Does not cleave the 4-Gln-|-His-5 bond in B chain of insulin.. Acid protease active in intracellular protein breakdown. Plays a role in APP processing following cleavage and activation by ADAM30 which leads to APP degradation. In Bos taurus (Bovine), this protein is Cathepsin D (CTSD).